The chain runs to 433 residues: Zinc finger protein CONSTANS-LIKE 15 (433 aa).

Positions 9, 12, 32, 37, 52, 55, 75, and 80 each coordinate Zn(2+). A B box-type 1; atypical zinc finger spans residues 9–51 (CDFCGERTAVLFCRADTAKLCLPCDQQVHTANLLSRKHVRSQI). The B box-type 2; atypical zinc-finger motif lies at 52–94 (CDNCGNEPVSVRCFTDNLILCQECDWDVHGSCSVSDAHVRSAV). Residues 319 to 353 (DDYKRSTSGQVQPTKSESNNRPITFGSEKGSNSSS) form a disordered region. The segment covering 324–340 (STSGQVQPTKSESNNRP) has biased composition (polar residues). Residues 374–398 (TKADLERLAQNRGDAMQRYKEKRKT) adopt a coiled-coil conformation. Residues 385 to 427 (RGDAMQRYKEKRKTRRYDKTIRYESRKARADTRLRVRGRFVKA) form the CCT domain.

This sequence belongs to the CONSTANS family.

The protein resides in the nucleus. The sequence is that of Zinc finger protein CONSTANS-LIKE 15 (COL15) from Arabidopsis thaliana (Mouse-ear cress).